The chain runs to 1793 residues: Chitin synthase 5 (1793 aa).

The tract at residues 1–28 (MTNPRMSMYSLASEAPGGNRGTGQQSTQ) is disordered. Residues asparagine 70, asparagine 164, asparagine 638, asparagine 664, and asparagine 669 are each glycosylated (N-linked (GlcNAc...) asparagine). The next 2 helical transmembrane spans lie at 750-770 (VWVF…LRYV) and 786-806 (LVLC…IVAF). The Cytochrome b5 heme-binding domain maps to 815–877 (DKAYSQKEVD…GMNLDDYFVA (63 aa)). Residues asparagine 897, asparagine 1019, and asparagine 1023 are each glycosylated (N-linked (GlcNAc...) asparagine). Residues 1056 to 1076 (LLLAFSIMLCAVILLKFVSAL) form a helical membrane-spanning segment. Asparagine 1421 carries N-linked (GlcNAc...) asparagine glycosylation. 3 helical membrane passes run 1452-1472 (LFGT…IYLV), 1479-1499 (FPLI…LIFI), and 1507-1527 (IGWM…LPIY). N-linked (GlcNAc...) asparagine glycosylation is found at asparagine 1534 and asparagine 1705. In terms of domain architecture, DEK-C spans 1735–1791 (GPDDGMIVEAIRTVLMEVDLDTVTKKQVRALVEQRLQSELVGERRTFMDRQIDHELA).

This sequence belongs to the chitin synthase family. Class V subfamily.

The protein localises to the cell membrane. The enzyme catalyses [(1-&gt;4)-N-acetyl-beta-D-glucosaminyl](n) + UDP-N-acetyl-alpha-D-glucosamine = [(1-&gt;4)-N-acetyl-beta-D-glucosaminyl](n+1) + UDP + H(+). Its function is as follows. Polymerizes chitin, a structural polymer of the cell wall and septum, by transferring the sugar moiety of UDP-GlcNAc to the non-reducing end of the growing chitin polymer. Regulates Germination and Tolerance to Hyperosmotic Stress. Plays a key role in pathogenicity. Likely contributes to post-penetration virulence. The protein is Chitin synthase 5 of Verticillium dahliae (strain VdLs.17 / ATCC MYA-4575 / FGSC 10137) (Verticillium wilt).